A 134-amino-acid polypeptide reads, in one-letter code: Large ribosomal subunit protein bL20 (134 aa).

This sequence belongs to the bacterial ribosomal protein bL20 family.

Functionally, binds directly to 23S ribosomal RNA and is necessary for the in vitro assembly process of the 50S ribosomal subunit. It is not involved in the protein synthesizing functions of that subunit. The polypeptide is Large ribosomal subunit protein bL20 (Brucella abortus (strain S19)).